The sequence spans 381 residues: Putative steryl acetyl hydrolase mug81 (381 aa).

The Cytoplasmic segment spans residues 1 to 9; it reads MISLSLLYR. Residues 10-30 traverse the membrane as a helical; Signal-anchor for type II membrane protein segment; that stretch reads ILTLPIILVGTTILYFTIGTN. At 31–381 the chain is on the lumenal side; it reads FPHDELRHNL…YTFLRETFEE (351 aa). The Involved in the stabilization of the negatively charged intermediate by the formation of the oxyanion hole motif lies at 125–127; sequence HGG. The N-linked (GlcNAc...) asparagine glycan is linked to Asn193. Ser200 is an active-site residue.

This sequence belongs to the 'GDXG' lipolytic enzyme family.

The protein localises to the cytoplasm. The protein resides in the endoplasmic reticulum membrane. Functionally, required for the deacetylation of acetylated sterols. Has a role in meiosis. The sequence is that of Putative steryl acetyl hydrolase mug81 (mug180) from Schizosaccharomyces pombe (strain 972 / ATCC 24843) (Fission yeast).